The following is a 198-amino-acid chain: Recombination protein RecR (198 aa).

The C4-type zinc-finger motif lies at 57-72 (CEKCNTFTEAQICEVC). In terms of domain architecture, Toprim spans 80 to 175 (TLLCVVETPA…AVTRLARGVP (96 aa)).

It belongs to the RecR family.

In terms of biological role, may play a role in DNA repair. It seems to be involved in an RecBC-independent recombinational process of DNA repair. It may act with RecF and RecO. This Burkholderia cenocepacia (strain HI2424) protein is Recombination protein RecR.